The sequence spans 62 residues: UPF0434 protein Fphi_1862 (62 aa).

This sequence belongs to the UPF0434 family.

The polypeptide is UPF0434 protein Fphi_1862 (Francisella philomiragia subsp. philomiragia (strain ATCC 25017 / CCUG 19701 / FSC 153 / O#319-036)).